The primary structure comprises 188 residues: Inosine triphosphate pyrophosphatase (188 aa).

12-17 (TGNKNK) contributes to the ITP binding site. Glu40 provides a ligand contact to Mg(2+). ITP is bound by residues Lys52, 68–69 (DT), Lys85, 144–147 (FGWD), Lys165, and 170–171 (HR).

The protein belongs to the HAM1 NTPase family. As to quaternary structure, homodimer. Mg(2+) serves as cofactor. The cofactor is Mn(2+).

It is found in the cytoplasm. It localises to the nucleus. It catalyses the reaction ITP + H2O = IMP + diphosphate + H(+). It carries out the reaction dITP + H2O = dIMP + diphosphate + H(+). The enzyme catalyses XTP + H2O = XMP + diphosphate + H(+). Pyrophosphatase that hydrolyzes non-canonical purine nucleotides such as inosine triphosphate (ITP), deoxyinosine triphosphate (dITP) or xanthosine 5'-triphosphate (XTP) to their respective monophosphate derivatives. The enzyme does not distinguish between the deoxy- and ribose forms. Probably excludes non-canonical purines from RNA and DNA precursor pools, thus preventing their incorporation into RNA and DNA and avoiding chromosomal lesions. In Phaeosphaeria nodorum (strain SN15 / ATCC MYA-4574 / FGSC 10173) (Glume blotch fungus), this protein is Inosine triphosphate pyrophosphatase.